Consider the following 87-residue polypeptide: Large ribosomal subunit protein bL31B (87 aa).

Belongs to the bacterial ribosomal protein bL31 family. Type B subfamily. As to quaternary structure, part of the 50S ribosomal subunit.

The sequence is that of Large ribosomal subunit protein bL31B from Burkholderia thailandensis (strain ATCC 700388 / DSM 13276 / CCUG 48851 / CIP 106301 / E264).